The primary structure comprises 69 residues: MLNTCRVPLTDRKVKEKRAMKQHKAMIVALIVICITAVVAALVTRKDLCEVHIRTGQTEVAVFTAYESE.

A helical transmembrane segment spans residues 24–44; that stretch reads KAMIVALIVICITAVVAALVT.

It belongs to the Hok/Gef family.

It localises to the cell inner membrane. In terms of biological role, might be the toxic component of a type I toxin-antitoxin (TA) system. Regulatory peptide which completely overlaps hokC and enables hokC expression. The sequence is that of Regulatory protein MokC (mokC) from Escherichia coli (strain K12).